The following is a 694-amino-acid chain: Cyclic nucleotide-gated channel alpha-3 (694 aa).

Polar residues-rich tracts occupy residues 1–11 (MAKINTQYSHP) and 112–123 (SQESNAQANVGS). Disordered regions lie at residues 1-24 (MAKINTQYSHPSRTHLKVKTSDRD) and 109-152 (EVSS…EEKK). Residues 1-170 (MAKINTQYSH…VDPSSNLYYR (170 aa)) are Cytoplasmic-facing. A helical transmembrane segment spans residues 171 to 192 (WLTAIALPVFYNWYLLICRACF). Residues 193–198 (DELQSE) are Extracellular-facing. A helical transmembrane segment spans residues 199-219 (YLMLWLVLDYSADVLYVLDVL). Residues 220-246 (VRARTGFLEQGLMVSDTNRLWQHYKTT) lie on the Cytoplasmic side of the membrane. A helical membrane pass occupies residues 247–266 (TQFKLDVLSLVPTDLAYLKV). Over 267 to 270 (GTNY) the chain is Extracellular. A helical transmembrane segment spans residues 271-288 (PEVRFNRLLKFSRLFEFF). At 289 to 298 (DRTETRTNYP) the chain is on the cytoplasmic side. The interval 298–406 (PNMFRIGNLV…GNVGSMISNM (109 aa)) is ion conduction pathway. A helical membrane pass occupies residues 299-321 (NMFRIGNLVLYILIIIHWNACIY). Over 322 to 347 (FAISKFIGFGTDSWVYPNISIPEHGR) the chain is Extracellular. An N-linked (GalNAc...) asparagine glycan is attached at Asn339. Transmembrane regions (helical) follow at residues 348–378 (LSRKYIYSLYWSTLTLTTIGETPPPVKDEEY) and 379–403 (LFVVVDFLVGVLIFATIVGNVGSMI). Positions 365–368 (TIGE) are selectivity filter. Residues 404-694 (SNMNASRAEF…DATKTEDKQQ (291 aa)) are Cytoplasmic-facing. Positions 408–485 (ASRAEFQAKI…TLKKVRIFQD (78 aa)) are C-linker. The segment at 488–608 (AGLLVELVLK…EEKGRQILMK (121 aa)) is cyclic nucleotide-binding domain. Residues Gly548, Glu549, Ser551, Arg564, Thr565, and Asp609 each coordinate 3',5'-cyclic GMP. Residues 626 to 669 (LEEKVEQLGSSLDTLQTRFARLLAEYNATQMKMKQRLSQLESQV) adopt a coiled-coil conformation. The disordered stretch occupies residues 662-694 (LSQLESQVKGGGDKPLADGEVPGDATKTEDKQQ).

The protein belongs to the cyclic nucleotide-gated cation channel (TC 1.A.1.5) family. CNGA3 subfamily. Forms heterotetrameric channels composed of CNGA3 and CNGB3 subunits with 3:1 stoichiometry. Prominently expressed in retina.

Its subcellular location is the cell membrane. It catalyses the reaction Ca(2+)(in) = Ca(2+)(out). The enzyme catalyses Na(+)(in) = Na(+)(out). The catalysed reaction is K(+)(in) = K(+)(out). It carries out the reaction NH4(+)(in) = NH4(+)(out). It catalyses the reaction Rb(+)(in) = Rb(+)(out). The enzyme catalyses Li(+)(in) = Li(+)(out). The catalysed reaction is Cs(+)(in) = Cs(+)(out). Inhibited by L-cis-diltiazem. In terms of biological role, pore-forming subunit of the cone cyclic nucleotide-gated channel. Mediates cone photoresponses at bright light converting transient changes in intracellular cGMP levels into electrical signals. In the dark, cGMP levels are high and keep the channel open enabling a steady inward current carried by Na(+) and Ca(2+) ions that leads to membrane depolarization and neurotransmitter release from synaptic terminals. Upon photon absorption cGMP levels decline leading to channel closure and membrane hyperpolarization that ultimately slows neurotransmitter release and signals the presence of light, the end point of the phototransduction cascade. Pore-forming subunit of the gustatory cyclic nucleotide-gated channel. In the taste buds, may sense oral extracellular pH and conduct ion currents that modulate the excitability of taste cells. Conducts cGMP- and cAMP-gated ion currents, with permeability for monovalent and divalent cations. In Homo sapiens (Human), this protein is Cyclic nucleotide-gated channel alpha-3.